The chain runs to 190 residues: 6,7-dimethyl-8-ribityllumazine synthase (190 aa).

5-amino-6-(D-ribitylamino)uracil is bound by residues Phe-23, 61–63, and 85–87; these read SFE and AVI. Residue 90-91 coordinates (2S)-2-hydroxy-3-oxobutyl phosphate; that stretch reads QT. The Proton donor role is filled by His-93. Residue Phe-118 participates in 5-amino-6-(D-ribitylamino)uracil binding. Position 132 (Arg-132) interacts with (2S)-2-hydroxy-3-oxobutyl phosphate.

The protein belongs to the DMRL synthase family.

It catalyses the reaction (2S)-2-hydroxy-3-oxobutyl phosphate + 5-amino-6-(D-ribitylamino)uracil = 6,7-dimethyl-8-(1-D-ribityl)lumazine + phosphate + 2 H2O + H(+). It participates in cofactor biosynthesis; riboflavin biosynthesis; riboflavin from 2-hydroxy-3-oxobutyl phosphate and 5-amino-6-(D-ribitylamino)uracil: step 1/2. In terms of biological role, catalyzes the formation of 6,7-dimethyl-8-ribityllumazine by condensation of 5-amino-6-(D-ribitylamino)uracil with 3,4-dihydroxy-2-butanone 4-phosphate. This is the penultimate step in the biosynthesis of riboflavin. This is 6,7-dimethyl-8-ribityllumazine synthase from Nostoc sp. (strain PCC 7120 / SAG 25.82 / UTEX 2576).